The chain runs to 23 residues: Aldehyde dehydrogenase (23 aa).

It belongs to the aldehyde dehydrogenase family.

It catalyses the reaction an aldehyde + NAD(+) + H2O = a carboxylate + NADH + 2 H(+). This Moraxella sp. (strain TAE123) protein is Aldehyde dehydrogenase.